We begin with the raw amino-acid sequence, 159 residues long: Protein RseC (159 aa).

At 1 to 72 the chain is on the cytoplasmic side; that stretch reads MIKEWATVVS…QKVELGIAEG (72 aa). A helical transmembrane segment spans residues 73–95; that stretch reads SLLSSALLVYMSPLVGLFLIASL. The Periplasmic portion of the chain corresponds to 96-98; that stretch reads FQL. A helical membrane pass occupies residues 99-121; the sequence is LFASDVAALCGAILGGIGGFLIA. Residues 122-159 are Cytoplasmic-facing; that stretch reads RGYSRKFAARAEWQPIILSVALPPGLVRFETSSEDASQ.

Belongs to the RseC family.

The protein localises to the cell inner membrane. Its function is as follows. May play a role in reduction of the SoxR iron-sulfur cluster. May work together with the RsxABCDGE complex. This is Protein RseC from Escherichia coli (strain K12).